Consider the following 275-residue polypeptide: MKNWIVGMVALVTMVPVMAATPWQKITHPVAGSPQSIGGFANGCVIGAQPLPLESADYQVMRSDQRRYFGHPDLLNFIHRLSAQAHQQQLGTVLIGDMAMPAGGRFSSGHASHQSGLDVDIWLQLPKQRWSQQQLLKPQPIDLVAVDGKRVIPALWQPQIESLIKLAAKDNDVTRIFVNPAIKKQLCLDAGADRQWLHKVRPWFAHRAHMHVRLRCPANSLECVDQDTPPPGDGCGAELESWFQPPPPSAKPGKTLPPPLPPSCQALLDNHFATE.

Residues 1–19 (MKNWIVGMVALVTMVPVMA) form the signal peptide. 3 disulfide bridges follow: Cys44–Cys264, Cys187–Cys235, and Cys216–Cys223. His110, His113, Asp120, Asp147, and His211 together coordinate Zn(2+). The disordered stretch occupies residues 227 to 262 (DTPPPGDGCGAELESWFQPPPPSAKPGKTLPPPLPP). Over residues 244–262 (QPPPPSAKPGKTLPPPLPP) the composition is skewed to pro residues.

Belongs to the peptidase M74 family. In terms of assembly, dimer. Requires Zn(2+) as cofactor.

Its subcellular location is the periplasm. Murein endopeptidase that cleaves the D-alanyl-meso-2,6-diamino-pimelyl amide bond that connects peptidoglycan strands. Likely plays a role in the removal of murein from the sacculus. The chain is Penicillin-insensitive murein endopeptidase from Yersinia pestis bv. Antiqua (strain Antiqua).